We begin with the raw amino-acid sequence, 363 residues long: Cinnamyl alcohol dehydrogenase 2 (363 aa).

Cys-47 is a binding site for Zn(2+). Thr-49 is an NADP(+) binding site. Residues His-69, Glu-70, Cys-100, Cys-103, Cys-106, Cys-114, and Cys-163 each coordinate Zn(2+). NADP(+) is bound by residues Thr-167, 188-193 (GLGGVG), 211-216 (SSSARK), Thr-251, Gly-275, and 298-300 (SFI).

This sequence belongs to the zinc-containing alcohol dehydrogenase family. Homodimer. The cofactor is Zn(2+). In terms of tissue distribution, expressed in roots behind the root tips in the pericycle region and layer of cortical cells adjacent to the exodermis. Expressed in vascular bundles and lateral veins of leaf sheaths and blades. Expressed in the vicinity of vascular bundles in the first internode below the inflorescence. Highly expressed in the culm.

The enzyme catalyses (E)-cinnamyl alcohol + NADP(+) = (E)-cinnamaldehyde + NADPH + H(+). The catalysed reaction is (E)-coniferol + NADP(+) = (E)-coniferaldehyde + NADPH + H(+). It carries out the reaction (E)-sinapyl alcohol + NADP(+) = (E)-sinapaldehyde + NADPH + H(+). It catalyses the reaction (E)-4-coumaroyl alcohol + NADP(+) = (E)-4-coumaraldehyde + NADPH + H(+). The enzyme catalyses (E)-caffeyl alcohol + NADP(+) = (E)-caffeyl aldehyde + NADPH + H(+). It functions in the pathway aromatic compound metabolism; phenylpropanoid biosynthesis. Functionally, involved in lignin biosynthesis. Catalyzes the final step specific for the production of lignin monomers. Catalyzes the NADPH-dependent reduction of coniferaldehyde and sinapaldehyde to their respective alcohols. Plays the major role in monolignol biosynthesis. Functions cooperatively with COMT in the culm internodes for the biosynthesis of monolignols, the lignin precursors. May be involved in lignin biosynthesis in leaves and roots. In Oryza sativa subsp. japonica (Rice), this protein is Cinnamyl alcohol dehydrogenase 2.